We begin with the raw amino-acid sequence, 177 residues long: ATP-dependent protease subunit HslV (177 aa).

T7 is an active-site residue. Residues G162, C165, and T168 each contribute to the Na(+) site.

The protein belongs to the peptidase T1B family. HslV subfamily. A double ring-shaped homohexamer of HslV is capped on each side by a ring-shaped HslU homohexamer. The assembly of the HslU/HslV complex is dependent on binding of ATP.

It localises to the cytoplasm. The enzyme catalyses ATP-dependent cleavage of peptide bonds with broad specificity.. Allosterically activated by HslU binding. Protease subunit of a proteasome-like degradation complex believed to be a general protein degrading machinery. This Persephonella marina (strain DSM 14350 / EX-H1) protein is ATP-dependent protease subunit HslV.